The following is a 135-amino-acid chain: Small ribosomal subunit protein uS8 (135 aa).

It belongs to the universal ribosomal protein uS8 family. Part of the 30S ribosomal subunit. Contacts proteins S5 and S12.

Its function is as follows. One of the primary rRNA binding proteins, it binds directly to 16S rRNA central domain where it helps coordinate assembly of the platform of the 30S subunit. In Parafrankia sp. (strain EAN1pec), this protein is Small ribosomal subunit protein uS8.